A 435-amino-acid chain; its full sequence is ATP-dependent protease ATPase subunit HslU (435 aa).

ATP is bound by residues Val-18, 60–65 (GCGKTE), Asp-248, Glu-313, and Arg-385.

This sequence belongs to the ClpX chaperone family. HslU subfamily. In terms of assembly, a double ring-shaped homohexamer of HslV is capped on each side by a ring-shaped HslU homohexamer. The assembly of the HslU/HslV complex is dependent on binding of ATP.

The protein resides in the cytoplasm. Its function is as follows. ATPase subunit of a proteasome-like degradation complex; this subunit has chaperone activity. The binding of ATP and its subsequent hydrolysis by HslU are essential for unfolding of protein substrates subsequently hydrolyzed by HslV. HslU recognizes the N-terminal part of its protein substrates and unfolds these before they are guided to HslV for hydrolysis. In Beijerinckia indica subsp. indica (strain ATCC 9039 / DSM 1715 / NCIMB 8712), this protein is ATP-dependent protease ATPase subunit HslU.